Reading from the N-terminus, the 1050-residue chain is Inositol hexakisphosphate kinase 1 (1050 aa).

Disordered regions lie at residues K87–S117, P129–V177, R269–H319, and S396–D423. S150 carries the phosphoserine modification. Residues K156–P173 are compositionally biased toward polar residues. A compositionally biased stretch (basic and acidic residues) spans E290–E306. Acidic residues predominate over residues Q307 to D316. At S396 the chain carries Phosphoserine. Residues N402–V417 are compositionally biased toward basic and acidic residues. S469 is modified (phosphoserine). A compositionally biased stretch (low complexity) spans N508–S522. Disordered regions lie at residues N508 to S539 and R562 to Q625. S537, S539, S566, S583, S589, S646, S664, and S670 each carry phosphoserine. Residues S566–L624 show a composition bias toward polar residues. P772 to G780 contacts substrate.

The protein belongs to the inositol phosphokinase (IPK) family.

It localises to the cytoplasm. It catalyses the reaction 1D-myo-inositol hexakisphosphate + ATP = 5-diphospho-1D-myo-inositol 1,2,3,4,6-pentakisphosphate + ADP. It carries out the reaction 1-diphospho-1D-myo-inositol 2,3,4,5,6-pentakisphosphate + ATP + H(+) = 1,5-bis(diphospho)-1D-myo-inositol 2,3,4,6-tetrakisphosphate + ADP. In terms of biological role, converts inositol hexakisphosphate (InsP6) to diphosphoinositol pentakisphosphate (InsP7/PP-InsP5). Involved in phosphate regulation and polyphosphate accumulation. Required for resistance to salt stress, cell wall integrity, vacuole morphogenesis, and telomere maintenance. In Saccharomyces cerevisiae (strain ATCC 204508 / S288c) (Baker's yeast), this protein is Inositol hexakisphosphate kinase 1 (KCS1).